Reading from the N-terminus, the 273-residue chain is Protein INAPERTURATE POLLEN1 (273 aa).

The DOG1 domain maps to 12 to 267 (SRRFNDFYED…KDQILLQDFE (256 aa)).

Expressed only in anthers and in pollen. Not detected in other flower tissues, stems, leaves and siliques.

The protein localises to the cytoplasm. Required for the formation of pollen surface apertures, which arise by restriction of exine deposition at specific sites. The aperture length depends on the INP1 dosage. Does not play a role in specifying the number or position of apertures. Acts in a sporophytic manner. The polypeptide is Protein INAPERTURATE POLLEN1 (Arabidopsis thaliana (Mouse-ear cress)).